A 340-amino-acid polypeptide reads, in one-letter code: Dihydroorotate dehydrogenase (quinone) (340 aa).

Residues 65–69 (AGLDK) and T89 each bind FMN. Substrate is bound at residue K69. Position 114-118 (114-118 (NRMGF)) interacts with substrate. FMN is bound by residues N142 and N175. Residue N175 coordinates substrate. S178 serves as the catalytic Nucleophile. N180 contacts substrate. FMN-binding residues include K220 and T248. 249–250 (NT) provides a ligand contact to substrate. FMN-binding positions include G271, G300, and 321–322 (YT).

Belongs to the dihydroorotate dehydrogenase family. Type 2 subfamily. In terms of assembly, monomer. Requires FMN as cofactor.

It localises to the cell membrane. It catalyses the reaction (S)-dihydroorotate + a quinone = orotate + a quinol. The protein operates within pyrimidine metabolism; UMP biosynthesis via de novo pathway; orotate from (S)-dihydroorotate (quinone route): step 1/1. Its function is as follows. Catalyzes the conversion of dihydroorotate to orotate with quinone as electron acceptor. This is Dihydroorotate dehydrogenase (quinone) from Paraburkholderia xenovorans (strain LB400).